Consider the following 364-residue polypeptide: tRNA 2-selenouridine synthase (364 aa).

The Rhodanese domain maps to 14–137 (LLADTPLIDV…LRQTAIQATW (124 aa)). Catalysis depends on Cys97, which acts as the S-selanylcysteine intermediate.

The protein belongs to the SelU family. Monomer.

The enzyme catalyses 5-methylaminomethyl-2-thiouridine(34) in tRNA + selenophosphate + (2E)-geranyl diphosphate + H2O + H(+) = 5-methylaminomethyl-2-selenouridine(34) in tRNA + (2E)-thiogeraniol + phosphate + diphosphate. It catalyses the reaction 5-methylaminomethyl-2-thiouridine(34) in tRNA + (2E)-geranyl diphosphate = 5-methylaminomethyl-S-(2E)-geranyl-thiouridine(34) in tRNA + diphosphate. It carries out the reaction 5-methylaminomethyl-S-(2E)-geranyl-thiouridine(34) in tRNA + selenophosphate + H(+) = 5-methylaminomethyl-2-(Se-phospho)selenouridine(34) in tRNA + (2E)-thiogeraniol. The catalysed reaction is 5-methylaminomethyl-2-(Se-phospho)selenouridine(34) in tRNA + H2O = 5-methylaminomethyl-2-selenouridine(34) in tRNA + phosphate. Its function is as follows. Involved in the post-transcriptional modification of the uridine at the wobble position (U34) of tRNA(Lys), tRNA(Glu) and tRNA(Gln). Catalyzes the conversion of 2-thiouridine (S2U-RNA) to 2-selenouridine (Se2U-RNA). Acts in a two-step process involving geranylation of 2-thiouridine (S2U) to S-geranyl-2-thiouridine (geS2U) and subsequent selenation of the latter derivative to 2-selenouridine (Se2U) in the tRNA chain. In Salmonella gallinarum (strain 287/91 / NCTC 13346), this protein is tRNA 2-selenouridine synthase.